The primary structure comprises 174 residues: UPF0113 protein AF_0058 (174 aa).

The PUA domain occupies 87–161; the sequence is RNRVWVNERG…KVFVENLVDR (75 aa).

The protein belongs to the UPF0113 family.

The chain is UPF0113 protein AF_0058 from Archaeoglobus fulgidus (strain ATCC 49558 / DSM 4304 / JCM 9628 / NBRC 100126 / VC-16).